Here is a 384-residue protein sequence, read N- to C-terminus: Polar flagellin C (384 aa).

Residues 317 to 347 (AKQNRLSHSINNLANIQENVDASNSRIKDTD) adopt a coiled-coil conformation.

Belongs to the bacterial flagellin family. As to quaternary structure, heteromer of multiple flagellin subunits including FlaA, FlaB/D, FlaC, FlaE and FlaF. Homomer of FlaC is not able to form a functional filament.

Its subcellular location is the secreted. The protein resides in the bacterial flagellum. Its function is as follows. Flagellin is the subunit protein which polymerizes to form the filaments of bacterial flagella. FlaC is not essential for polar flagellar synthesis and swimming motility. Homomer of FlaC is not able to form a functional filament. This Vibrio parahaemolyticus serotype O3:K6 (strain RIMD 2210633) protein is Polar flagellin C (flaC).